The primary structure comprises 140 residues: Nucleoside diphosphate kinase (140 aa).

Positions 11, 59, 87, 93, 104, and 114 each coordinate ATP. The active-site Pros-phosphohistidine intermediate is the H117.

It belongs to the NDK family. Homotetramer. Mg(2+) is required as a cofactor.

It localises to the cytoplasm. It catalyses the reaction a 2'-deoxyribonucleoside 5'-diphosphate + ATP = a 2'-deoxyribonucleoside 5'-triphosphate + ADP. It carries out the reaction a ribonucleoside 5'-diphosphate + ATP = a ribonucleoside 5'-triphosphate + ADP. In terms of biological role, major role in the synthesis of nucleoside triphosphates other than ATP. The ATP gamma phosphate is transferred to the NDP beta phosphate via a ping-pong mechanism, using a phosphorylated active-site intermediate. The protein is Nucleoside diphosphate kinase of Nitrobacter hamburgensis (strain DSM 10229 / NCIMB 13809 / X14).